The sequence spans 665 residues: Protein-arginine deiminase type-2 (665 aa).

Residues Asp123, Asp125, Asp127, Val129, Glu131, Asn154, Asp156, Glu158, Asp166, Asp169, Lys171, Asp177, Asp180, Glu354, Asp389, Phe408, Leu411, and Glu412 each coordinate Ca(2+). The active-site Nucleophile is Cys647.

The protein belongs to the protein arginine deiminase family. In terms of assembly, homodimer. Ca(2+) serves as cofactor. As to expression, detected in keratinocytes in epidermis (at protein level).

The protein resides in the cytoplasm. It carries out the reaction L-arginyl-[protein] + H2O = L-citrullyl-[protein] + NH4(+). In terms of biological role, catalyzes the deimination of arginine residues of proteins. This chain is Protein-arginine deiminase type-2 (PADI2), found in Homo sapiens (Human).